Here is a 451-residue protein sequence, read N- to C-terminus: Bifunctional protein GlmU (451 aa).

The interval 1–225 is pyrophosphorylase; it reads MVVVAILAAG…YQEILGINDR (225 aa). UDP-N-acetyl-alpha-D-glucosamine contacts are provided by residues 7–10, Lys21, Gln72, and 77–78; these read LAAG and GT. Asp102 provides a ligand contact to Mg(2+). The UDP-N-acetyl-alpha-D-glucosamine site is built by Gly139, Glu154, Asn169, and Asn223. Asn223 is a binding site for Mg(2+). The tract at residues 226–246 is linker; the sequence is LQLATAYEILQRRVKEQWMMA. The N-acetyltransferase stretch occupies residues 247–451; the sequence is GVTLIDPNSI…LGWRRKSGES (205 aa). UDP-N-acetyl-alpha-D-glucosamine contacts are provided by Arg328 and Lys346. The active-site Proton acceptor is the His358. Tyr361 and Asn372 together coordinate UDP-N-acetyl-alpha-D-glucosamine. Residues Ala375, 381-382, Ser400, Ala418, and Arg435 contribute to the acetyl-CoA site; that span reads NY.

In the N-terminal section; belongs to the N-acetylglucosamine-1-phosphate uridyltransferase family. It in the C-terminal section; belongs to the transferase hexapeptide repeat family. In terms of assembly, homotrimer. Mg(2+) is required as a cofactor.

The protein localises to the cytoplasm. The enzyme catalyses alpha-D-glucosamine 1-phosphate + acetyl-CoA = N-acetyl-alpha-D-glucosamine 1-phosphate + CoA + H(+). It catalyses the reaction N-acetyl-alpha-D-glucosamine 1-phosphate + UTP + H(+) = UDP-N-acetyl-alpha-D-glucosamine + diphosphate. It functions in the pathway nucleotide-sugar biosynthesis; UDP-N-acetyl-alpha-D-glucosamine biosynthesis; N-acetyl-alpha-D-glucosamine 1-phosphate from alpha-D-glucosamine 6-phosphate (route II): step 2/2. It participates in nucleotide-sugar biosynthesis; UDP-N-acetyl-alpha-D-glucosamine biosynthesis; UDP-N-acetyl-alpha-D-glucosamine from N-acetyl-alpha-D-glucosamine 1-phosphate: step 1/1. The protein operates within bacterial outer membrane biogenesis; LPS lipid A biosynthesis. Catalyzes the last two sequential reactions in the de novo biosynthetic pathway for UDP-N-acetylglucosamine (UDP-GlcNAc). The C-terminal domain catalyzes the transfer of acetyl group from acetyl coenzyme A to glucosamine-1-phosphate (GlcN-1-P) to produce N-acetylglucosamine-1-phosphate (GlcNAc-1-P), which is converted into UDP-GlcNAc by the transfer of uridine 5-monophosphate (from uridine 5-triphosphate), a reaction catalyzed by the N-terminal domain. This chain is Bifunctional protein GlmU, found in Nostoc sp. (strain PCC 7120 / SAG 25.82 / UTEX 2576).